The following is a 583-amino-acid chain: Long-chain-fatty-acid--AMP ligase FadD26 (583 aa).

The protein belongs to the ATP-dependent AMP-binding enzyme family.

It catalyses the reaction holo-[(phenol)carboxyphthiodiolenone synthase] + a long-chain fatty acid + ATP = a long-chain fatty acyl-[(phenol)carboxyphthiodiolenone synthase] + AMP + diphosphate. The enzyme catalyses eicosanoate + holo-[(phenol)carboxyphthiodiolenone synthase] + ATP = icosanoyl-[(phenol)carboxyphthiodiolenone synthase] + AMP + diphosphate. The catalysed reaction is holo-[(phenol)carboxyphthiodiolenone synthase] + docosanoate + ATP = docosanoyl-[(phenol)carboxyphthiodiolenone synthase] + AMP + diphosphate. The protein operates within lipid metabolism; fatty acid biosynthesis. Functionally, catalyzes the activation of long-chain fatty acids as acyl-adenylates (acyl-AMP), which are then transferred to the multifunctional polyketide synthase PpsA for further chain extension. Catalyzes the adenylation of the long-chain fatty acids eicosanoate (C20) or docosanoate (C22), and potentially the very-long-chain fatty acid lignocerate (C24). Involved in the biosynthesis of phthiocerol dimycocerosate (DIM A) and phthiodiolone dimycocerosate (DIM B). The protein is Long-chain-fatty-acid--AMP ligase FadD26 (fadD26) of Mycobacterium tuberculosis (strain CDC 1551 / Oshkosh).